Here is a 159-residue protein sequence, read N- to C-terminus: U1 small nuclear ribonucleoprotein C (159 aa).

The Matrin-type zinc finger occupies 4 to 36 (FYCDYCDTYLTHDSPSVRKTHCSGRKHKENVKD). Disordered stretches follow at residues 63–95 (PPTP…MPAP) and 139–159 (MRPP…RPDR). Residues 77–95 (IPPPPSMGGPPRPGMMPAP) are compositionally biased toward pro residues.

It belongs to the U1 small nuclear ribonucleoprotein C family. As to quaternary structure, component of the U1 snRNP. The U1 snRNP is composed of the U1 snRNA and the 7 core Sm proteins snrpb, snrpd1, snrpd2, snrpd3, snrpe, snrpf and snrpg that assemble in a heptameric protein ring on the Sm site of the small nuclear RNA to form the core snRNP, and at least 3 U1 snRNP-specific proteins snrnp70/U1-70K, snrpa/U1-A and snrpc/U1-C. snrpc/U1-C interacts with U1 snRNA and the 5' splice-site region of the pre-mRNA.

Its subcellular location is the nucleus. Its function is as follows. Component of the spliceosomal U1 snRNP, which is essential for recognition of the pre-mRNA 5' splice-site and the subsequent assembly of the spliceosome. snrpc/U1-C is directly involved in initial 5' splice-site recognition for both constitutive and regulated alternative splicing. The interaction with the 5' splice-site seems to precede base-pairing between the pre-mRNA and the U1 snRNA. Stimulates commitment or early (E) complex formation by stabilizing the base pairing of the 5' end of the U1 snRNA and the 5' splice-site region. In Xenopus tropicalis (Western clawed frog), this protein is U1 small nuclear ribonucleoprotein C.